Reading from the N-terminus, the 428-residue chain is Glutamate-1-semialdehyde 2,1-aminomutase 1 (428 aa).

The residue at position 267 (K267) is an N6-(pyridoxal phosphate)lysine.

This sequence belongs to the class-III pyridoxal-phosphate-dependent aminotransferase family. HemL subfamily. In terms of assembly, homodimer. Requires pyridoxal 5'-phosphate as cofactor.

The protein localises to the cytoplasm. The enzyme catalyses (S)-4-amino-5-oxopentanoate = 5-aminolevulinate. Its pathway is porphyrin-containing compound metabolism; protoporphyrin-IX biosynthesis; 5-aminolevulinate from L-glutamyl-tRNA(Glu): step 2/2. The polypeptide is Glutamate-1-semialdehyde 2,1-aminomutase 1 (Staphylococcus aureus (strain MW2)).